The following is a 475-amino-acid chain: Aspartyl/glutamyl-tRNA(Asn/Gln) amidotransferase subunit B (475 aa).

The protein belongs to the GatB/GatE family. GatB subfamily. Heterotrimer of A, B and C subunits.

It catalyses the reaction L-glutamyl-tRNA(Gln) + L-glutamine + ATP + H2O = L-glutaminyl-tRNA(Gln) + L-glutamate + ADP + phosphate + H(+). The enzyme catalyses L-aspartyl-tRNA(Asn) + L-glutamine + ATP + H2O = L-asparaginyl-tRNA(Asn) + L-glutamate + ADP + phosphate + 2 H(+). In terms of biological role, allows the formation of correctly charged Asn-tRNA(Asn) or Gln-tRNA(Gln) through the transamidation of misacylated Asp-tRNA(Asn) or Glu-tRNA(Gln) in organisms which lack either or both of asparaginyl-tRNA or glutaminyl-tRNA synthetases. The reaction takes place in the presence of glutamine and ATP through an activated phospho-Asp-tRNA(Asn) or phospho-Glu-tRNA(Gln). This chain is Aspartyl/glutamyl-tRNA(Asn/Gln) amidotransferase subunit B, found in Macrococcus caseolyticus (strain JCSC5402) (Macrococcoides caseolyticum).